The following is a 677-amino-acid chain: Methionine--tRNA ligase (677 aa).

Positions proline 15–histidine 25 match the 'HIGH' region motif. Residues cysteine 146, cysteine 149, cysteine 159, and cysteine 162 each contribute to the Zn(2+) site. A 'KMSKS' region motif is present at residues lysine 333 to serine 337. Lysine 336 contributes to the ATP binding site. A tRNA-binding domain is found at aspartate 575–lysine 677.

Belongs to the class-I aminoacyl-tRNA synthetase family. MetG type 1 subfamily. As to quaternary structure, homodimer. The cofactor is Zn(2+).

It is found in the cytoplasm. The catalysed reaction is tRNA(Met) + L-methionine + ATP = L-methionyl-tRNA(Met) + AMP + diphosphate. Is required not only for elongation of protein synthesis but also for the initiation of all mRNA translation through initiator tRNA(fMet) aminoacylation. The chain is Methionine--tRNA ligase from Salmonella typhimurium (strain LT2 / SGSC1412 / ATCC 700720).